We begin with the raw amino-acid sequence, 197 residues long: Imidazoleglycerol-phosphate dehydratase (197 aa).

The protein belongs to the imidazoleglycerol-phosphate dehydratase family.

It localises to the cytoplasm. It catalyses the reaction D-erythro-1-(imidazol-4-yl)glycerol 3-phosphate = 3-(imidazol-4-yl)-2-oxopropyl phosphate + H2O. Its pathway is amino-acid biosynthesis; L-histidine biosynthesis; L-histidine from 5-phospho-alpha-D-ribose 1-diphosphate: step 6/9. The protein is Imidazoleglycerol-phosphate dehydratase of Rhodopseudomonas palustris (strain BisB5).